Reading from the N-terminus, the 130-residue chain is Small ribosomal subunit protein uS9 (130 aa).

It belongs to the universal ribosomal protein uS9 family.

The sequence is that of Small ribosomal subunit protein uS9 from Exiguobacterium sibiricum (strain DSM 17290 / CCUG 55495 / CIP 109462 / JCM 13490 / 255-15).